We begin with the raw amino-acid sequence, 147 residues long: Hemoglobin subunit beta-2 (147 aa).

The Globin domain occupies 3 to 147 (HWTAEEKAAI…LVDGLSQGYN (145 aa)). Heme b contacts are provided by H64 and H93.

This sequence belongs to the globin family. As to quaternary structure, heterotetramer of two alpha chains and two beta chains. Red blood cells.

In terms of biological role, involved in oxygen transport from the lung to the various peripheral tissues. In Xenopus laevis (African clawed frog), this protein is Hemoglobin subunit beta-2 (hbb2).